The primary structure comprises 232 residues: RNA chaperone ProQ (232 aa).

A disordered region spans residues 105 to 182; the sequence is EAKARVQAQR…REEQHTPVSD (78 aa). The span at 117–136 shows a compositional bias: basic and acidic residues; sequence QQAKKREAAAAAGEKEDAPR. The segment covering 137 to 146 has biased composition (basic residues); sequence RERKPRPTTP. Residues 147 to 177 show a composition bias toward basic and acidic residues; sequence RRKEGAERKPRAQKPVEKAPKTVKAPREEQH.

The protein belongs to the ProQ family.

The protein localises to the cytoplasm. RNA chaperone with significant RNA binding, RNA strand exchange and RNA duplexing activities. May regulate ProP activity through an RNA-based, post-transcriptional mechanism. The chain is RNA chaperone ProQ from Shigella flexneri serotype 5b (strain 8401).